The chain runs to 248 residues: Phosphoglycerate mutase (248 aa).

Substrate contacts are provided by residues 8-15, 21-22, Arg-60, 87-90, Lys-98, 114-115, and 183-184; these read RHGQSEWN, TG, ERHY, RR, and GN. The Tele-phosphohistidine intermediate role is filled by His-9. The Proton donor/acceptor role is filled by Glu-87.

It belongs to the phosphoglycerate mutase family. BPG-dependent PGAM subfamily.

The protein localises to the cytoplasm. It carries out the reaction (2R)-2-phosphoglycerate = (2R)-3-phosphoglycerate. The protein operates within carbohydrate degradation; glycolysis; pyruvate from D-glyceraldehyde 3-phosphate: step 3/5. This chain is Phosphoglycerate mutase (GPM1), found in Candida albicans (strain SC5314 / ATCC MYA-2876) (Yeast).